The sequence spans 369 residues: Glutamate 5-kinase (369 aa).

Lysine 9 lines the ATP pocket. The substrate site is built by serine 49, aspartate 136, and asparagine 148. Residues 168 to 169 and 210 to 216 each bind ATP; these read TD and TGGMLTK. The PUA domain occupies 275-355; it reads RGSVYVDEGA…KGVFIHRDDW (81 aa).

This sequence belongs to the glutamate 5-kinase family.

The protein resides in the cytoplasm. The enzyme catalyses L-glutamate + ATP = L-glutamyl 5-phosphate + ADP. The protein operates within amino-acid biosynthesis; L-proline biosynthesis; L-glutamate 5-semialdehyde from L-glutamate: step 1/2. Catalyzes the transfer of a phosphate group to glutamate to form L-glutamate 5-phosphate. The sequence is that of Glutamate 5-kinase from Neisseria meningitidis serogroup B (strain ATCC BAA-335 / MC58).